The primary structure comprises 330 residues: Ketol-acid reductoisomerase (NADP(+)) (330 aa).

The KARI N-terminal Rossmann domain occupies 1 to 181; the sequence is MNVYYEQDAD…GGAKAGVIET (181 aa). Residues 24-27, R47, S50, S52, and 82-85 each bind NADP(+); these read YGSQ and DQYQ. H107 is an active-site residue. G133 is a binding site for NADP(+). In terms of domain architecture, KARI C-terminal knotted spans 182-327; it reads TIKNETETDL…AKLRNMMSWL (146 aa). Mg(2+) is bound by residues D190, E194, E226, and E230. Position 251 (S251) interacts with substrate.

It belongs to the ketol-acid reductoisomerase family. It depends on Mg(2+) as a cofactor.

The catalysed reaction is (2R)-2,3-dihydroxy-3-methylbutanoate + NADP(+) = (2S)-2-acetolactate + NADPH + H(+). The enzyme catalyses (2R,3R)-2,3-dihydroxy-3-methylpentanoate + NADP(+) = (S)-2-ethyl-2-hydroxy-3-oxobutanoate + NADPH + H(+). It participates in amino-acid biosynthesis; L-isoleucine biosynthesis; L-isoleucine from 2-oxobutanoate: step 2/4. Its pathway is amino-acid biosynthesis; L-valine biosynthesis; L-valine from pyruvate: step 2/4. Involved in the biosynthesis of branched-chain amino acids (BCAA). Catalyzes an alkyl-migration followed by a ketol-acid reduction of (S)-2-acetolactate (S2AL) to yield (R)-2,3-dihydroxy-isovalerate. In the isomerase reaction, S2AL is rearranged via a Mg-dependent methyl migration to produce 3-hydroxy-3-methyl-2-ketobutyrate (HMKB). In the reductase reaction, this 2-ketoacid undergoes a metal-dependent reduction by NADPH to yield (R)-2,3-dihydroxy-isovalerate. The polypeptide is Ketol-acid reductoisomerase (NADP(+)) (Chlorobium phaeovibrioides (strain DSM 265 / 1930) (Prosthecochloris vibrioformis (strain DSM 265))).